Here is a 236-residue protein sequence, read N- to C-terminus: Small ribosomal subunit protein uS2c (236 aa).

This sequence belongs to the universal ribosomal protein uS2 family.

It is found in the plastid. The protein resides in the chloroplast. This chain is Small ribosomal subunit protein uS2c (rps2), found in Aethionema grandiflorum (Persian stone-cress).